Reading from the N-terminus, the 393-residue chain is NAD(P)H-quinone oxidoreductase subunit H, chloroplastic (393 aa).

This sequence belongs to the complex I 49 kDa subunit family. As to quaternary structure, NDH is composed of at least 16 different subunits, 5 of which are encoded in the nucleus.

Its subcellular location is the plastid. It localises to the chloroplast thylakoid membrane. It catalyses the reaction a plastoquinone + NADH + (n+1) H(+)(in) = a plastoquinol + NAD(+) + n H(+)(out). The catalysed reaction is a plastoquinone + NADPH + (n+1) H(+)(in) = a plastoquinol + NADP(+) + n H(+)(out). In terms of biological role, NDH shuttles electrons from NAD(P)H:plastoquinone, via FMN and iron-sulfur (Fe-S) centers, to quinones in the photosynthetic chain and possibly in a chloroplast respiratory chain. The immediate electron acceptor for the enzyme in this species is believed to be plastoquinone. Couples the redox reaction to proton translocation, and thus conserves the redox energy in a proton gradient. The protein is NAD(P)H-quinone oxidoreductase subunit H, chloroplastic of Oryza nivara (Indian wild rice).